Reading from the N-terminus, the 190-residue chain is uncharacterized protein (190 aa).

The signal sequence occupies residues 1 to 28 (MEFSLQYITIFIFVILFLIGLFSSKSRS).

This is an uncharacterized protein from Haemophilus influenzae (strain ATCC 51907 / DSM 11121 / KW20 / Rd).